Reading from the N-terminus, the 319-residue chain is Acetyl-coenzyme A carboxylase carboxyl transferase subunit alpha (319 aa).

In terms of domain architecture, CoA carboxyltransferase C-terminal spans 39 to 296 (EINRLRSKSI…KTQLLLDLTE (258 aa)).

It belongs to the AccA family. In terms of assembly, acetyl-CoA carboxylase is a heterohexamer composed of biotin carboxyl carrier protein (AccB), biotin carboxylase (AccC) and two subunits each of ACCase subunit alpha (AccA) and ACCase subunit beta (AccD).

The protein resides in the cytoplasm. It catalyses the reaction N(6)-carboxybiotinyl-L-lysyl-[protein] + acetyl-CoA = N(6)-biotinyl-L-lysyl-[protein] + malonyl-CoA. Its pathway is lipid metabolism; malonyl-CoA biosynthesis; malonyl-CoA from acetyl-CoA: step 1/1. In terms of biological role, component of the acetyl coenzyme A carboxylase (ACC) complex. First, biotin carboxylase catalyzes the carboxylation of biotin on its carrier protein (BCCP) and then the CO(2) group is transferred by the carboxyltransferase to acetyl-CoA to form malonyl-CoA. This chain is Acetyl-coenzyme A carboxylase carboxyl transferase subunit alpha, found in Blochmanniella pennsylvanica (strain BPEN).